The sequence spans 352 residues: B1 bradykinin receptor (352 aa).

Residues M1–T41 lie on the Extracellular side of the membrane. N-linked (GlcNAc...) asparagine glycans are attached at residues N13 and N21. Residues F42–L62 traverse the membrane as a helical segment. Residues L63–E72 are Cytoplasmic-facing. A helical transmembrane segment spans residues I73–A93. Residues E94 to R110 are Extracellular-facing. Residues C109 and C188 are joined by a disulfide bond. A helical membrane pass occupies residues G111–S131. At Q132–A153 the chain is on the cytoplasmic side. Residues R154 to L174 form a helical membrane-spanning segment. Over R175–N206 the chain is Extracellular. N184 carries N-linked (GlcNAc...) asparagine glycosylation. Residues I207–S227 traverse the membrane as a helical segment. Residues L228 to L250 are Cytoplasmic-facing. Residues I251–L271 traverse the membrane as a helical segment. Topologically, residues E272–Q294 are extracellular. The helical transmembrane segment at L295–G315 threads the bilayer. At R316–N352 the chain is on the cytoplasmic side. The S-palmitoyl cysteine moiety is linked to residue C329.

This sequence belongs to the G-protein coupled receptor 1 family. Bradykinin receptor subfamily. BDKRB1 sub-subfamily.

It localises to the cell membrane. Functionally, this is a receptor for bradykinin. Could be a factor in chronic pain and inflammation. The sequence is that of B1 bradykinin receptor (BDKRB1) from Chlorocebus pygerythrus (Vervet monkey).